Here is a 149-residue protein sequence, read N- to C-terminus: Large ribosomal subunit protein bL9 (149 aa).

This sequence belongs to the bacterial ribosomal protein bL9 family.

Binds to the 23S rRNA. This is Large ribosomal subunit protein bL9 from Anaeromyxobacter dehalogenans (strain 2CP-1 / ATCC BAA-258).